Here is a 36-residue protein sequence, read N- to C-terminus: Peruvianin-1 (36 aa).

It belongs to the germin family. As to quaternary structure, homohexamer, possibly consisting of a trimer of dimers. Post-translationally, glycosylated.

Inhibited by iodoacetamide and trans-epoxysuccinyl-L-leucylamido(4-guanidino)butane (E-64) but not by phenylmethylsulfonyl fluoride (PMSF), pepstatin-A, ethylenediamine tetra acetic acid (EDTA) or ethylene glycol tetraacetic acid (EGTA). In terms of biological role, cysteine protease able to degrade azocasein and benzoyl-arginine-beta-naphtylamide (BANA) in vitro. The polypeptide is Peruvianin-1 (Thevetia peruviana (Yellow oleander)).